We begin with the raw amino-acid sequence, 629 residues long: Translation initiation factor IF-2 (629 aa).

The tract at residues 1–20 is disordered; that stretch reads MAKNIKTNKKPQQVNKKEMS. A tr-type G domain is found at 127 to 297; sequence HRAPIVTIMG…LLIAEMQDYK (171 aa). The tract at residues 136–143 is G1; that stretch reads GHVDHGKT. 136–143 is a binding site for GTP; it reads GHVDHGKT. The interval 161 to 165 is G2; sequence GITQA. Positions 183-186 are G3; sequence DTPG. GTP contacts are provided by residues 183 to 187 and 237 to 240; these read DTPGH and NKCD. A G4 region spans residues 237–240; it reads NKCD. Positions 273–275 are G5; the sequence is SAK.

This sequence belongs to the TRAFAC class translation factor GTPase superfamily. Classic translation factor GTPase family. IF-2 subfamily.

The protein localises to the cytoplasm. One of the essential components for the initiation of protein synthesis. Protects formylmethionyl-tRNA from spontaneous hydrolysis and promotes its binding to the 30S ribosomal subunits. Also involved in the hydrolysis of GTP during the formation of the 70S ribosomal complex. The chain is Translation initiation factor IF-2 from Mesoplasma florum (strain ATCC 33453 / NBRC 100688 / NCTC 11704 / L1) (Acholeplasma florum).